We begin with the raw amino-acid sequence, 694 residues long: Heat shock protein homolog SSE1 (694 aa).

Residues 671–694 (AQRSADSEAKKDATPEGDAQMDLD) form a disordered region. Positions 675–684 (ADSEAKKDAT) are enriched in basic and acidic residues.

It belongs to the heat shock protein 70 family.

It is found in the cytoplasm. This is Heat shock protein homolog SSE1 (SSE1) from Candida glabrata (strain ATCC 2001 / BCRC 20586 / JCM 3761 / NBRC 0622 / NRRL Y-65 / CBS 138) (Yeast).